The sequence spans 78 residues: Alpha-amylase inhibitor Haim-1 (78 aa).

2 cysteine pairs are disulfide-bonded: Cys-11–Cys-27 and Cys-45–Cys-72.

Functionally, inhibits mammalian alpha-amylases specifically but has no action on plant and microbial alpha-amylases. The sequence is that of Alpha-amylase inhibitor Haim-1 from Streptomyces griseosporeus.